A 150-amino-acid polypeptide reads, in one-letter code: Large ribosomal subunit protein bL9 (150 aa).

It belongs to the bacterial ribosomal protein bL9 family.

In terms of biological role, binds to the 23S rRNA. The sequence is that of Large ribosomal subunit protein bL9 from Colwellia psychrerythraea (strain 34H / ATCC BAA-681) (Vibrio psychroerythus).